The sequence spans 108 residues: Thiosulfate sulfurtransferase GlpE (108 aa).

A Rhodanese domain is found at 17–105 (QEKEAVLVDI…WQRQFPAEVA (89 aa)). Catalysis depends on C65, which acts as the Cysteine persulfide intermediate.

The protein belongs to the GlpE family.

It localises to the cytoplasm. The enzyme catalyses thiosulfate + hydrogen cyanide = thiocyanate + sulfite + 2 H(+). It carries out the reaction thiosulfate + [thioredoxin]-dithiol = [thioredoxin]-disulfide + hydrogen sulfide + sulfite + 2 H(+). Transferase that catalyzes the transfer of sulfur from thiosulfate to thiophilic acceptors such as cyanide or dithiols. May function in a CysM-independent thiosulfate assimilation pathway by catalyzing the conversion of thiosulfate to sulfite, which can then be used for L-cysteine biosynthesis. This chain is Thiosulfate sulfurtransferase GlpE, found in Shigella dysenteriae serotype 1 (strain Sd197).